The chain runs to 509 residues: Putative 6-phosphofructo-2-kinase/fructose-2,6-bisphosphatase YLR345W (509 aa).

Ser-6 bears the Phosphoserine mark. Residues 6–291 (SDDEELLNGL…FFLMNLRQKK (286 aa)) form a 6-phosphofructo-2-kinase region. Residue 90–98 (GLPATSKTL) participates in ATP binding. Asp-173 (proton donor/acceptor) is an active-site residue. 212-217 (NIALAL) provides a ligand contact to ATP. Arg-237 serves as a coordination point for beta-D-fructose 6-phosphate. The tract at residues 292-466 (GCVYFARCGT…IAHESTLRVL (175 aa)) is fructose-2,6-bisphosphatase. Residue Arg-298 participates in beta-D-fructose 2,6-bisphosphate binding. 415–418 (YKES) lines the ATP pocket. Beta-D-fructose 2,6-bisphosphate contacts are provided by Tyr-433 and Arg-464. 460-464 (ESTLR) is an ATP binding site.

This sequence in the C-terminal section; belongs to the phosphoglycerate mutase family. Homodimer.

It localises to the cytoplasm. The enzyme catalyses beta-D-fructose 2,6-bisphosphate + H2O = beta-D-fructose 6-phosphate + phosphate. It carries out the reaction beta-D-fructose 6-phosphate + ATP = beta-D-fructose 2,6-bisphosphate + ADP + H(+). Synthesis and degradation of fructose 2,6-bisphosphate. In Saccharomyces cerevisiae (strain ATCC 204508 / S288c) (Baker's yeast), this protein is Putative 6-phosphofructo-2-kinase/fructose-2,6-bisphosphatase YLR345W.